The sequence spans 266 residues: Large ribosomal subunit protein uL2m (266 aa).

The protein belongs to the universal ribosomal protein uL2 family.

Its subcellular location is the mitochondrion. The sequence is that of Large ribosomal subunit protein uL2m (mrpl2) from Dictyostelium citrinum (Slime mold).